The sequence spans 466 residues: Keratin, type II cytoskeletal 7 (466 aa).

Residue Ser-2 is modified to N-acetylserine. A phosphoserine mark is found at Ser-2 and Ser-7. Positions 2–91 (SLHFGSQVFS…DPSIQQVRQE (90 aa)) are head. Ser-12 is a glycosylation site (O-linked (GlcNAc) serine). Dimethylated arginine; alternate is present on Arg-20. Arg-20 is subject to Omega-N-methylarginine; alternate. Phosphoserine occurs at positions 54, 72, and 84. Positions 91–127 (EEREQIKTLNNKFASFIDKVRFLEQQNKLLETKWALL) are coil 1A. In terms of domain architecture, IF rod spans 92–404 (EREQIKTLNN…KLLEGEESRL (313 aa)). Thr-98 carries the post-translational modification Phosphothreonine. The interval 128–145 (QEQKSAKSNRLPGIFEAQ) is linker 1. Residue Lys-131 forms a Glycyl lysine isopeptide (Lys-Gly) (interchain with G-Cter in SUMO2) linkage. The interval 146–237 (IAGLRKQLEA…TLYEQELKEL (92 aa)) is coil 1B. Lys-180 is subject to N6-acetyllysine. The interval 238–261 (QSEVSDTSVVLSMDNNRSLDLDSI) is linker 12. A Phosphoserine modification is found at Ser-255. A coil 2 region spans residues 262 to 400 (IAEVKAQYEE…ATYRKLLEGE (139 aa)). Glycyl lysine isopeptide (Lys-Gly) (interchain with G-Cter in SUMO2) cross-links involve residues Lys-266 and Lys-287. Residue Thr-290 is modified to Phosphothreonine. Glycyl lysine isopeptide (Lys-Gly) (interchain with G-Cter in SUMO2) cross-links involve residues Lys-297 and Lys-332. Positions 401 to 466 (ESRLTGDGVG…TSATSRSPRK (66 aa)) are tail.

This sequence belongs to the intermediate filament family. Heterotetramer of two type I and two type II keratins. Interacts with eukaryotic translation initiator factor 3 (eIF3) subunit EIF3S10. Interacts with GPER1. Arg-20 is dimethylated, probably to asymmetric dimethylarginine.

In terms of biological role, blocks interferon-dependent interphase and stimulates DNA synthesis in cells. The sequence is that of Keratin, type II cytoskeletal 7 from Bos taurus (Bovine).